The chain runs to 328 residues: Sin3 histone deacetylase corepressor complex component SDS3 (328 aa).

The span at 1 to 22 shows a compositional bias: low complexity; the sequence is MSAAGLLAPAPAPAAAPAAPEY. The disordered stretch occupies residues 1–69; the sequence is MSAAGLLAPA…HDEEDYVEMK (69 aa). Residue Ser-2 is modified to N-acetylserine. The tract at residues 2-170 is mediates interaction with USP17L2; the sequence is SAAGLLAPAP…IENEKLTMEL (169 aa). Composition is skewed to acidic residues over residues 23–37 and 45–54; these read YPED…EDDE and SDEDTEDASE. Phosphoserine occurs at positions 32 and 45. Thr-49 carries the post-translational modification Phosphothreonine. Position 53 is a phosphoserine (Ser-53). Basic and acidic residues predominate over residues 56-69; the sequence is DLAKHDEEDYVEMK. Residues 66–171 are a coiled coil; that stretch reads VEMKEQMYQD…ENEKLTMELT (106 aa). Glycyl lysine isopeptide (Lys-Gly) (interchain with G-Cter in SUMO2) cross-links involve residues Lys-69, Lys-178, and Lys-201. The tract at residues 188-226 is sin3 interaction domain (SID); that stretch reads RPNDPVPIPDKRRKPAPAQLNYLLTDEQIMEDLRTLNKL. The tract at residues 226 to 252 is disordered; it reads LKSPKRPASPSSPEHLPATPAESPAQR. Ser-228, Ser-234, and Ser-237 each carry phosphoserine. Thr-244 is subject to Phosphothreonine.

It belongs to the SDS3 family. In terms of assembly, interacts with HCFC1. Homodimer. Component of the SIN3 histone deacetylase (HDAC) corepressor complex. Interacts with SIN3A. Interaction with SIN3B enhances the interaction between SIN3B and HDAC1 to form a complex. Component of a mSin3A corepressor complex that contains SIN3A, SAP130, SUDS3/SAP45, ARID4B/SAP180, HDAC1 and HDAC2. Interacts with USP17L2; the interaction is direct. Interacts with FOXK2. Post-translationally, polyubiquitinated. 'Lys-63'-polyubiquitinated SUDS3 positively regulates histone deacetylation. Regulated through deubiquitination by USP17L2/USP17 that cleaves 'Lys-63'-linked ubiquitin chains. As to expression, expressed in all newborn tissues tested, including brain, kidney and liver.

Its subcellular location is the nucleus. Its function is as follows. Regulatory protein which represses transcription and augments histone deacetylase activity of HDAC1. May have a potential role in tumor suppressor pathways through regulation of apoptosis. May function in the assembly and/or enzymatic activity of the mSin3A corepressor complex or in mediating interactions between the complex and other regulatory complexes. This is Sin3 histone deacetylase corepressor complex component SDS3 (Suds3) from Mus musculus (Mouse).